We begin with the raw amino-acid sequence, 171 residues long: Adenine phosphoribosyltransferase (171 aa).

It belongs to the purine/pyrimidine phosphoribosyltransferase family. Homodimer.

It is found in the cytoplasm. The enzyme catalyses AMP + diphosphate = 5-phospho-alpha-D-ribose 1-diphosphate + adenine. Its pathway is purine metabolism; AMP biosynthesis via salvage pathway; AMP from adenine: step 1/1. In terms of biological role, catalyzes a salvage reaction resulting in the formation of AMP, that is energically less costly than de novo synthesis. This chain is Adenine phosphoribosyltransferase, found in Christiangramia forsetii (strain DSM 17595 / CGMCC 1.15422 / KT0803) (Gramella forsetii).